A 281-amino-acid polypeptide reads, in one-letter code: Sulfur carrier protein FdhD (281 aa).

Catalysis depends on C117, which acts as the Cysteine persulfide intermediate.

It belongs to the FdhD family.

It is found in the cytoplasm. Required for formate dehydrogenase (FDH) activity. Acts as a sulfur carrier protein that transfers sulfur from IscS to the molybdenum cofactor prior to its insertion into FDH. The polypeptide is Sulfur carrier protein FdhD (Xanthomonas campestris pv. campestris (strain 8004)).